Reading from the N-terminus, the 144-residue chain is Large ribosomal subunit protein uL15 (144 aa).

Residues 1–54 (MRLNTLSPAEGSKKAGKRLGRGIGSGLGKTGGRGHKGQKSRSGGGVRRGFEGGQ) form a disordered region. Residues 21 to 31 (RGIGSGLGKTG) are compositionally biased toward gly residues.

The protein belongs to the universal ribosomal protein uL15 family. Part of the 50S ribosomal subunit.

Functionally, binds to the 23S rRNA. This Salmonella arizonae (strain ATCC BAA-731 / CDC346-86 / RSK2980) protein is Large ribosomal subunit protein uL15.